Consider the following 1571-residue polypeptide: Pentafunctional AROM polypeptide 2 (1571 aa).

Residues 1–380 (MAEPTKISIL…YEPKASVVSN (380 aa)) are 3-dehydroquinate synthase. Residues 44-46 (DTN), 81-84 (ENSK), 112-114 (GGV), and Asp-117 contribute to the NAD(+) site. Arg-128 serves as a coordination point for 7-phospho-2-dehydro-3-deoxy-D-arabino-heptonate. Residue 137–138 (TT) coordinates NAD(+). 2 residues coordinate 7-phospho-2-dehydro-3-deoxy-D-arabino-heptonate: Asp-144 and Lys-150. Position 159 (Lys-159) interacts with NAD(+). A 7-phospho-2-dehydro-3-deoxy-D-arabino-heptonate-binding site is contributed by Asn-160. Residues 177-180 (FIDT) and Asn-188 contribute to the NAD(+) site. Glu-192 contributes to the Zn(2+) binding site. Residues 192-195 (EVIK) and Lys-246 contribute to the 7-phospho-2-dehydro-3-deoxy-D-arabino-heptonate site. Glu-256 serves as the catalytic Proton acceptor; for 3-dehydroquinate synthase activity. Residues 260–264 (RNLLN) and His-267 each bind 7-phospho-2-dehydro-3-deoxy-D-arabino-heptonate. His-267 lines the Zn(2+) pocket. His-271 functions as the Proton acceptor; for 3-dehydroquinate synthase activity in the catalytic mechanism. 7-phospho-2-dehydro-3-deoxy-D-arabino-heptonate contacts are provided by His-283 and Lys-352. His-283 contacts Zn(2+). The interval 393–838 (VIPGVPKNLN…WDALKQKFGV (446 aa)) is EPSP synthase. Catalysis depends on Cys-820, which acts as the For EPSP synthase activity. Residues 859 to 1051 (NASIIIIGMR…RKKHLSFFVS (193 aa)) form a shikimate kinase region. 866–873 (GMRGAGKT) provides a ligand contact to ATP. The interval 1052–1273 (LTLPDLRESG…AAPGQLSAAE (222 aa)) is 3-dehydroquinase. The Proton acceptor; for 3-dehydroquinate dehydratase activity role is filled by His-1175. The active-site Schiff-base intermediate with substrate; for 3-dehydroquinate dehydratase activity is the Lys-1203. A shikimate dehydrogenase region spans residues 1286–1571 (AKKFAVLGKP…NAVLGTNETK (286 aa)).

The protein in the N-terminal section; belongs to the sugar phosphate cyclases superfamily. Dehydroquinate synthase family. It in the 2nd section; belongs to the EPSP synthase family. This sequence in the 3rd section; belongs to the shikimate kinase family. In the 4th section; belongs to the type-I 3-dehydroquinase family. The protein in the C-terminal section; belongs to the shikimate dehydrogenase family. As to quaternary structure, homodimer. Zn(2+) serves as cofactor.

It localises to the cytoplasm. The enzyme catalyses 7-phospho-2-dehydro-3-deoxy-D-arabino-heptonate = 3-dehydroquinate + phosphate. It carries out the reaction 3-dehydroquinate = 3-dehydroshikimate + H2O. The catalysed reaction is shikimate + NADP(+) = 3-dehydroshikimate + NADPH + H(+). It catalyses the reaction shikimate + ATP = 3-phosphoshikimate + ADP + H(+). The enzyme catalyses 3-phosphoshikimate + phosphoenolpyruvate = 5-O-(1-carboxyvinyl)-3-phosphoshikimate + phosphate. Its pathway is metabolic intermediate biosynthesis; chorismate biosynthesis; chorismate from D-erythrose 4-phosphate and phosphoenolpyruvate: step 2/7. It participates in metabolic intermediate biosynthesis; chorismate biosynthesis; chorismate from D-erythrose 4-phosphate and phosphoenolpyruvate: step 3/7. The protein operates within metabolic intermediate biosynthesis; chorismate biosynthesis; chorismate from D-erythrose 4-phosphate and phosphoenolpyruvate: step 4/7. It functions in the pathway metabolic intermediate biosynthesis; chorismate biosynthesis; chorismate from D-erythrose 4-phosphate and phosphoenolpyruvate: step 5/7. Its pathway is metabolic intermediate biosynthesis; chorismate biosynthesis; chorismate from D-erythrose 4-phosphate and phosphoenolpyruvate: step 6/7. Its function is as follows. The AROM polypeptide catalyzes 5 consecutive enzymatic reactions in prechorismate polyaromatic amino acid biosynthesis. The chain is Pentafunctional AROM polypeptide 2 from Talaromyces marneffei (strain ATCC 18224 / CBS 334.59 / QM 7333) (Penicillium marneffei).